The following is a 776-amino-acid chain: General transcription and DNA repair factor IIH helicase subunit XPD (776 aa).

Positions 7-277 (DLLVYFPYSY…KKVDEKRLKD (271 aa)) constitute a Helicase ATP-binding domain. Residue 42–49 (MPSGTGKT) coordinates ATP. Positions 115, 133, 150, and 184 each coordinate [4Fe-4S] cluster. Residues 228–231 (DEAH) carry the DEAH box motif. A disordered region spans residues 736–776 (HVEKQSTSKPPQQQNSAINSTITTSTTTTTTTSTISETHLT). A compositionally biased stretch (polar residues) spans 742 to 754 (TSKPPQQQNSAIN). Low complexity predominate over residues 755–776 (STITTSTTTTTTTSTISETHLT).

The protein belongs to the helicase family. RAD3/XPD subfamily. As to quaternary structure, component of the 7-subunit TFIIH core complex composed of XPB/repB, XPD/repD, gtf2h1, gtf2h2, gtf2h3, gtf2h4 and gtf2h5, which is active in NER. The core complex associates with the 3-subunit CDK-activating kinase (CAK) module composed of cycH/cyclin H, cdk7 and mnat1 to form the 10-subunit holoenzyme (holo-TFIIH) active in transcription. The cofactor is Mg(2+). [4Fe-4S] cluster is required as a cofactor.

The protein resides in the nucleus. The catalysed reaction is Couples ATP hydrolysis with the unwinding of duplex DNA at the replication fork by translocating in the 5'-3' direction. This creates two antiparallel DNA single strands (ssDNA). The leading ssDNA polymer is the template for DNA polymerase III holoenzyme which synthesizes a continuous strand.. The enzyme catalyses ATP + H2O = ADP + phosphate + H(+). ATP-dependent 5'-3' DNA helicase, component of the general transcription and DNA repair factor IIH (TFIIH) core complex, which is involved in general and transcription-coupled nucleotide excision repair (NER) of damaged DNA and, when complexed to CDK-activating kinase (CAK), in transcription by RNA polymerase II. In NER, TFIIH acts by opening DNA around the lesion to allow the excision of the damaged oligonucleotide and its replacement by a new DNA fragment. The ATP-dependent helicase activity of XPD/repD is required for DNA opening. In transcription, TFIIH has an essential role in transcription initiation. When the pre-initiation complex (PIC) has been established, TFIIH is required for promoter opening and promoter escape. Phosphorylation of the C-terminal tail (CTD) of the largest subunit of RNA polymerase II by the kinase module CAK controls the initiation of transcription. XPD/repD acts by forming a bridge between CAK and the core-TFIIH complex. The protein is General transcription and DNA repair factor IIH helicase subunit XPD of Dictyostelium discoideum (Social amoeba).